The sequence spans 211 residues: 7-carboxy-7-deazaguanine synthase (211 aa).

Residues 22-24 (LQG) and R37 contribute to the substrate site. Residues 28 to 211 (NTGMPSVFVR…LQTHKLIGIE (184 aa)) enclose the Radical SAM core domain. [4Fe-4S] cluster-binding residues include C41, C45, and C48. Residue T50 participates in Mg(2+) binding. T78 is a substrate binding site. Residues G80 and 122 to 124 (SPK) contribute to the S-adenosyl-L-methionine site.

It belongs to the radical SAM superfamily. 7-carboxy-7-deazaguanine synthase family. In terms of assembly, homodimer. It depends on [4Fe-4S] cluster as a cofactor. Requires S-adenosyl-L-methionine as cofactor. The cofactor is Mg(2+).

It catalyses the reaction 6-carboxy-5,6,7,8-tetrahydropterin + H(+) = 7-carboxy-7-deazaguanine + NH4(+). It participates in purine metabolism; 7-cyano-7-deazaguanine biosynthesis. Its function is as follows. Catalyzes the complex heterocyclic radical-mediated conversion of 6-carboxy-5,6,7,8-tetrahydropterin (CPH4) to 7-carboxy-7-deazaguanine (CDG), a step common to the biosynthetic pathways of all 7-deazapurine-containing compounds. This is 7-carboxy-7-deazaguanine synthase from Haemophilus influenzae (strain ATCC 51907 / DSM 11121 / KW20 / Rd).